Consider the following 907-residue polypeptide: Protein translocase subunit SecA (907 aa).

ATP-binding positions include Gln-87, 105–109 (GEGKT), and Asp-510. Residues Cys-892, Cys-894, Cys-903, and His-904 each contribute to the Zn(2+) site.

This sequence belongs to the SecA family. Monomer and homodimer. Part of the essential Sec protein translocation apparatus which comprises SecA, SecYEG and auxiliary proteins SecDF-YajC and YidC. Zn(2+) is required as a cofactor.

The protein localises to the cell inner membrane. Its subcellular location is the cytoplasm. The catalysed reaction is ATP + H2O + cellular proteinSide 1 = ADP + phosphate + cellular proteinSide 2.. In terms of biological role, part of the Sec protein translocase complex. Interacts with the SecYEG preprotein conducting channel. Has a central role in coupling the hydrolysis of ATP to the transfer of proteins into and across the cell membrane, serving both as a receptor for the preprotein-SecB complex and as an ATP-driven molecular motor driving the stepwise translocation of polypeptide chains across the membrane. The protein is Protein translocase subunit SecA of Acinetobacter baumannii (strain ACICU).